The sequence spans 622 residues: Membrane protein insertase YidC (622 aa).

The helical transmembrane segment at 8–28 (LFLALILSMGIWMGVNYFFFP) threads the bilayer. Residues 33–61 (KTSETKEVKVDKPSDDKQDQIQKEKKESR) are compositionally biased toward basic and acidic residues. Residues 33 to 70 (KTSETKEVKVDKPSDDKQDQIQKEKKESRTTIPSKGTK) form a disordered region. Helical transmembrane passes span 413-433 (FTIPNYGWSIIIFAILFKLVF), 484-504 (VGGCLPMVIQIPIFIALYTAF), 532-552 (AIPYFTQTGIGLNLLALLMVG), and 571-591 (MLMYVMPVMMLYIFWNMPSGV).

The protein belongs to the OXA1/ALB3/YidC family. Type 1 subfamily. Interacts with the Sec translocase complex via SecD. Specifically interacts with transmembrane segments of nascent integral membrane proteins during membrane integration.

It is found in the cell inner membrane. Functionally, required for the insertion and/or proper folding and/or complex formation of integral membrane proteins into the membrane. Involved in integration of membrane proteins that insert both dependently and independently of the Sec translocase complex, as well as at least some lipoproteins. Aids folding of multispanning membrane proteins. In Leptospira borgpetersenii serovar Hardjo-bovis (strain JB197), this protein is Membrane protein insertase YidC.